The sequence spans 344 residues: MQLLCWWQVLLWVLGLPAHGLEVAEDSGHPWREERPVPALQVGAVYLHEEEVAQDHRDQARAAEPMEASLGPRGDPMVVLSVVPGAAEDQRSPEAHDGTCSAQGEEDPSCGRENLFGLQGAGGFQDREEEYYAEPGVTEAEPVATEDANSTDSLKSPKVNCEERNVTGLENFTLKILNMSQDLMDFLNPNGSDCTLVLFYTPWCRFSASLAPHFNSLPRAFPTLGFLALDASQHSSLSTRFGTVAVPNILLFQGAKPMARFNHTDRTLETLKIFIFNQTGIEAKKNVVVTQADQMGPLPSTLIKTVDWLLVFSLFFLISFIMYATIRTESIRWLIPGQEQEHAE.

Residues 1–20 (MQLLCWWQVLLWVLGLPAHG) form the signal peptide. At 21–305 (LEVAEDSGHP…GPLPSTLIKT (285 aa)) the chain is on the extracellular side. 2 disordered regions span residues 55-119 (DHRD…FGLQ) and 136-156 (GVTE…SLKS). The segment covering 88–97 (EDQRSPEAHD) has biased composition (basic and acidic residues). In terms of domain architecture, Thioredoxin spans 163–280 (ERNVTGLENF…LKIFIFNQTG (118 aa)). Residues Asn171, Asn178, Asn190, and Asn277 are each glycosylated (N-linked (GlcNAc...) asparagine). A helical transmembrane segment spans residues 306 to 326 (VDWLLVFSLFFLISFIMYATI). Residues 327–344 (RTESIRWLIPGQEQEHAE) are Cytoplasmic-facing.

The protein localises to the cell projection. It is found in the cilium membrane. Acts as a positive regulator of ciliary hedgehog signaling. Required for cilia biogenesis. The chain is Thioredoxin domain-containing protein 15 (Txndc15) from Mus musculus (Mouse).